The sequence spans 757 residues: DNA endonuclease RBBP8 (757 aa).

An essential for binding to the MRN complex and for RPA focus formation on DNA damage region spans residues 22 to 45; it reads DLWTKLKEYHDKETQGLQVKVTKL. Residues 35-84 are a coiled coil; that stretch reads TQGLQVKVTKLKKERILDAQRLEEFFTKNQQLREQQKVLHETIKVLEDRL. Residues 45 to 160 are required for interaction with LMO4, probably by stabilizing the interaction through RPPB8 dimerization; that stretch reads LKKERILDAQ…TDLESEEDVI (116 aa). Glycyl lysine isopeptide (Lys-Gly) (interchain with G-Cter in SUMO2) cross-links involve residues lysine 62 and lysine 115. Residues 117–138 are a coiled coil; that stretch reads ITELMNEKNTLQEENKKLSEQL. Lysine 193 participates in a covalent cross-link: Glycyl lysine isopeptide (Lys-Gly) (interchain with G-Cter in SUMO2). Serine 272 carries the post-translational modification Phosphoserine. At threonine 309 the chain carries Phosphothreonine. Serine 320, serine 321, and serine 343 each carry phosphoserine. A disordered region spans residues 348 to 375; it reads GKKTHLKTVPLSNTSAPGPEKPRSKSED. Residues lysine 354 and lysine 372 each participate in a glycyl lysine isopeptide (Lys-Gly) (interchain with G-Cter in SUMO2) cross-link. Serine 373 carries the post-translational modification Phosphoserine. Glycyl lysine isopeptide (Lys-Gly) (interchain with G-Cter in SUMO2) cross-links involve residues lysine 390, lysine 399, and lysine 405. Positions 407-417 are enriched in polar residues; that stretch reads TSEPISEQGNI. The segment at 407-430 is disordered; it reads TSEPISEQGNIGHSKDTDRDKHVV. The span at 419–429 shows a compositional bias: basic and acidic residues; sequence HSKDTDRDKHV. Residues lysine 433 and lysine 443 each participate in a glycyl lysine isopeptide (Lys-Gly) (interchain with G-Cter in SUMO2) cross-link. Positions 484–488 are PXDLS motif; the sequence is PLDLS. Residues 484 to 488 carry the PXDLS motif motif; that stretch reads PLDLS. The damage-recruitment motif stretch occupies residues 503–551; that stretch reads CENSKIRFRQVTLYEALKPIPRDSSSSRKALSGSCGLTKDSPEEPCLQE. Lysine 520 is covalently cross-linked (Glycyl lysine isopeptide (Lys-Gly) (interchain with G-Cter in SUMO2); alternate). The disordered stretch occupies residues 524 to 544; the sequence is RDSSSSRKALSGSCGLTKDSP. Residues lysine 564 and lysine 570 each participate in a glycyl lysine isopeptide (Lys-Gly) (interchain with G-Cter in SUMO2) cross-link. Lysine 596 participates in a covalent cross-link: Glycyl lysine isopeptide (Lys-Gly) (interchain with G-Cter in SUMO2); alternate. Residues lysine 605, lysine 630, and lysine 632 each participate in a glycyl lysine isopeptide (Lys-Gly) (interchain with G-Cter in SUMO2) cross-link. Positions 633–677 are required for interaction with LMO4, probably by making physical contact with LMO4; sequence SLQNNQDVSFENIQWSIDPGADLSQYKMGVTVDDTKDGSQSRLAG. Position 656 is a phosphoserine; by ATM (serine 656). Lysine 668 participates in a covalent cross-link: Glycyl lysine isopeptide (Lys-Gly) (interchain with G-Cter in SUMO2). Serine 671 is subject to Phosphoserine. Positions 696–728 are enriched in basic and acidic residues; the sequence is KKQEQKGEESPNGERKMNDSLEDMFDRTTHEEY. Residues 696-757 form a disordered region; it reads KKQEQKGEES…TTTKKPNISW (62 aa). Residue lysine 711 forms a Glycyl lysine isopeptide (Lys-Gly) (interchain with G-Cter in SUMO2) linkage. Serine 715 carries the phosphoserine modification. The span at 747–757 shows a compositional bias: polar residues; the sequence is STTTKKPNISW.

It belongs to the COM1/SAE2/CtIP family. As to quaternary structure, homotetramer; formed by antiparallel association of helical extensions protruding from the N-termini of two parallel coiled-coil dimers. Forms a dumbbell-shaped particle in which polar globular domains are held about 30 nm apart by a central rod. Homotetramerization is required for DNA-end resection and repair. Interacts (via the PXDLS motif) with CTBP1; the interaction is disrupted via binding of the adenovirus E1A to CTBP1. Component of the BRCA1-RBBP8 complex. Interacts (the Ser-321 phosphorylated form) with BRCA1 (via the C-terminal BRCT domains): the interaction occurs in the G2 phase, ubiquitinates RBBP8 and involves RBBP8 in BRCA1-dependent G2/M checkpoint control on DNA damage. Interacts with RB1. Interacts with the MRN complex. Interacts directly with MRE11; the interaction is required for efficient homologous recombination (HR) and regulation of the MRN complex. Interacts directly with RAD50. Interacts (when phosphorylated by CDK1) with NBN; promoting association with the MRN complex. Interacts with LMO4 (via the LIM zinc-binding 1 domain). Interacts with SIAH1. Interacts with RNF138. Interacts with EXD2. Interacts with CUL3 and KLHL15; this interaction leads to RBBP8 proteasomal degradation. Directly interacts with PIN1; this interaction depends upon RBBP8 phosphorylation, predominantly at Thr-309. Interacts with FZR1; this interaction leads to APC/C-mediated RBBP8 proteasomal degradation. Interacts with AUNIP; leading to recruit RBBP8 to sites of DNA damage. Interacts with SAMHD1. Interacts with HDGFL2. Post-translationally, hyperphosphorylation upon ionizing radiation results in dissociation from BRCA1. Phosphorylation by CDK1 is essential for the recruitment to DNA and the DNA repair function. Phosphorylated on Ser-321 as cells enter G2 phase. This phosphorylation is required for binding BRCA1 and for the G2/M DNA damage transition checkpoint control. Phosphorylation at Thr-309, probably catalyzed by CDK2, is required for PIN1-binding, while phosphorylation at Ser-272 serves as a PIN1 isomerization site. Phosphorylation at Thr-309 is cell-cycle dependent. It steadily increases during S phase, peaks at late S/G2 phase, and drops at G1. Phosphorylation is not required for tetramerization. Binds to DNA more strongly when dephosphorylated. Ubiquitinated. Ubiquitination at multiple sites by BRCA1 (via its N-terminal RING domain) does not lead to its proteasomal degradation but instead the ubiquitinated RBBP8 binds to chromatin following DNA damage and may play a role in G2/M checkpoint control. Ubiquitinated by RNF138 at its N-terminus. Ubiquitinated through 'Lys-48' by the E3 CUL3-KLHL15 complex; this modification leads to proteasomal degradation. Ubiquitinated by the E3 FZR1/APC/C complex; this modification leads to proteasomal degradation.

The protein resides in the nucleus. It is found in the chromosome. Functionally, endonuclease that cooperates with the MRE11-RAD50-NBN (MRN) complex in DNA-end resection, the first step of double-strand break (DSB) repair through the homologous recombination (HR) pathway. HR is restricted to S and G2 phases of the cell cycle and preferentially repairs DSBs resulting from replication fork collapse. Key determinant of DSB repair pathway choice, as it commits cells to HR by preventing classical non-homologous end-joining (NHEJ). Specifically promotes the endonuclease activity of the MRN complex to clear DNA ends containing protein adducts: recruited to DSBs by NBN following phosphorylation by CDK1, and promotes the endonuclease activity of MRE11 to clear protein-DNA adducts and generate clean double-strand break ends. Functions downstream of the MRN complex and ATM, promotes ATR activation and its recruitment to DSBs in the S/G2 phase facilitating the generation of ssDNA. Component of the BRCA1-RBBP8 complex that regulates CHEK1 activation and controls cell cycle G2/M checkpoints on DNA damage. During immunoglobulin heavy chain class-switch recombination, promotes microhomology-mediated alternative end joining (A-NHEJ) and plays an essential role in chromosomal translocations. Binds preferentially to DNA Y-junctions and to DNA substrates with blocked ends and promotes intermolecular DNA bridging. The chain is DNA endonuclease RBBP8 (RBBP8) from Bos taurus (Bovine).